Consider the following 64-residue polypeptide: Large ribosomal subunit protein bL33 (64 aa).

Belongs to the bacterial ribosomal protein bL33 family.

The sequence is that of Large ribosomal subunit protein bL33 from Picosynechococcus sp. (strain ATCC 27264 / PCC 7002 / PR-6) (Agmenellum quadruplicatum).